Reading from the N-terminus, the 147-residue chain is SPI-1 type 3 secretion system pilotin (147 aa).

The signal sequence occupies residues 1–15 (MKKFYSCLPVFLLIG). Cys-16 is lipidated: N-palmitoyl cysteine. A lipid anchor (S-diacylglycerol cysteine) is attached at Cys-16.

The protein belongs to the InvH family.

It localises to the cell outer membrane. Involved in the synthesis of the type III secretion system (T3SS), also called injectisome, which is used to inject bacterial effector proteins into eukaryotic host cells. Pilot protein that is required for the proper localization of the secretin InvG/SctC in the outer membrane. Necessary for efficient adherence and entry of these organisms into cultured epithelial cells. This is SPI-1 type 3 secretion system pilotin from Salmonella choleraesuis (strain SC-B67).